Here is a 168-residue protein sequence, read N- to C-terminus: uncharacterized protein (168 aa).

This is an uncharacterized protein from Bacillus subtilis (strain 168).